Here is a 519-residue protein sequence, read N- to C-terminus: MSNQVKIFDTTLRDGEQALAASLSMKEKLQIALALERLGVDIIEAGFPVSSPGDFRSVRSIAQEVKNATVCGLSRALEKDIDACGEALSVADNFRIHTFIATSDIHVANKLRKSQDEVVEMAVNAIKHAGRYTDDIEFSCEDAGRTPIDYLCRMVESAINAGATTVNIPDTVGYTTPTEFGGIIQNLFNRVPNIDKATISVHCHNDLGLAVANSLVAVEYGARQIECTINGIGERAGNCSLEEIAMILQTRQAMLGLNTNIRSHEISRTSKLVSQLCNMPVQSNKAIVGANAFSHSSGIHQDGVLKAQNTYEIMTPESVGINKNNLNLTSRSGRHVIKHRLEELGYKAEDYDLDTLYASFVKLADKKGQVFDYDLEALLFFDKQKPADEHYKLLYLQASSGKEIIPSATVKLQVGEEEIIESCTGNGPVDAAYKAIIKVLGHEQLEIVDFKLDSKGEGADALAQVSVIVEYNGRRFNGIGLATDIVESGVKALIHVLNNTHLADQIDHQKKQQTQTAGV.

In terms of domain architecture, Pyruvate carboxyltransferase spans 5-267; sequence VKIFDTTLRD…NTNIRSHEIS (263 aa). Residues Asp-14, His-202, His-204, and Asn-238 each coordinate Mn(2+). A regulatory domain region spans residues 392-519; that stretch reads KLLYLQASSG…KKQQTQTAGV (128 aa).

Belongs to the alpha-IPM synthase/homocitrate synthase family. LeuA type 1 subfamily. As to quaternary structure, homodimer. Mn(2+) is required as a cofactor.

The protein localises to the cytoplasm. The catalysed reaction is 3-methyl-2-oxobutanoate + acetyl-CoA + H2O = (2S)-2-isopropylmalate + CoA + H(+). Its pathway is amino-acid biosynthesis; L-leucine biosynthesis; L-leucine from 3-methyl-2-oxobutanoate: step 1/4. In terms of biological role, catalyzes the condensation of the acetyl group of acetyl-CoA with 3-methyl-2-oxobutanoate (2-ketoisovalerate) to form 3-carboxy-3-hydroxy-4-methylpentanoate (2-isopropylmalate). This is 2-isopropylmalate synthase from Pseudoalteromonas atlantica (strain T6c / ATCC BAA-1087).